A 141-amino-acid chain; its full sequence is UPF0310 protein SSA_0254 (141 aa).

This sequence belongs to the UPF0310 family.

This Streptococcus sanguinis (strain SK36) protein is UPF0310 protein SSA_0254.